The following is a 148-amino-acid chain: Leghemoglobin 3 (148 aa).

One can recognise a Globin domain in the interval 2 to 148 (GFTEKQEALV…LSAAIKKAMS (147 aa)). A Nitrated tyrosine modification is found at Tyr-30. Ser-45 is a heme b binding site. Ser-45 is modified (phosphoserine). His-63 is an O2 binding site. Heme b contacts are provided by Lys-66, His-95, and Lys-98. Tyr-136 is subject to Nitrated tyrosine.

Belongs to the plant globin family. In terms of assembly, monomer. In terms of processing, nitrated in effective nodules and particularly in hypoxic conditions; this mechanism may play a protective role in the symbiosis by buffering toxic peroxynitrite NO(2)(-). Nitration level decrease during nodule senescence. Phosphorylation at Ser-45 disrupts the molecular environment of its porphyrin ring oxygen binding pocket, thus leading to a reduced oxygen consumption and to the delivery of oxygen O(2) to symbiosomes. Stem nodules.

The protein localises to the cytoplasm. It localises to the cytosol. Its subcellular location is the nucleus. Functionally, leghemoglobin that reversibly binds oxygen O(2) through a pentacoordinated heme iron. In stem nodules, facilitates the diffusion of oxygen to the bacteroids while preventing the bacterial nitrogenase from being inactivated by buffering dioxygen, nitric oxide and carbon monoxide, and promoting the formation of reactive oxygen species (ROS, e.g. H(2)O(2)). This role is essential for symbiotic nitrogen fixation (SNF). This is Leghemoglobin 3 from Sesbania rostrata.